The following is a 437-amino-acid chain: Transmembrane protein with metallophosphoesterase domain (437 aa).

Helical transmembrane passes span 7 to 27 (LSAE…MLIS), 41 to 61 (ALLF…LGSL), 87 to 107 (IIVL…FFLV), 116 to 136 (LLSF…FVFG), and 164 to 184 (VLAL…AAQP). Positions 211, 213, 243, 274, 376, and 378 each coordinate a divalent metal cation.

This sequence belongs to the metallophosphoesterase superfamily. LOC643853 family. A divalent metal cation serves as cofactor.

Its subcellular location is the membrane. The sequence is that of Transmembrane protein with metallophosphoesterase domain (tmppe) from Danio rerio (Zebrafish).